Here is a 110-residue protein sequence, read N- to C-terminus: Bowman-Birk type proteinase inhibitor (110 aa).

Positions 1-28 (MVLMNKKAIMKLALMLFLLGFTANVVDA) are cleaved as a signal peptide. Positions 29 to 42 (RFDSTSFITQVLSN) are excised as a propeptide. 7 disulfides stabilise this stretch: C50/C103, C51/C66, C54/C99, C56/C64, C73/C80, C77/C92, and C82/C90.

Monomer.

In terms of biological role, inhibitor of trypsin and of chymotrypsin. The protein is Bowman-Birk type proteinase inhibitor of Lens culinaris (Lentil).